A 312-amino-acid chain; its full sequence is Pyridoxal 5'-phosphate synthase subunit PDX1 (312 aa).

Asp-43 is a binding site for D-ribose 5-phosphate. Lys-100 functions as the Schiff-base intermediate with D-ribose 5-phosphate in the catalytic mechanism. Position 172 (Gly-172) interacts with D-ribose 5-phosphate. A D-glyceraldehyde 3-phosphate-binding site is contributed by Arg-184. D-ribose 5-phosphate is bound by residues Gly-233 and 254 to 255 (GS).

This sequence belongs to the PdxS/SNZ family.

It carries out the reaction aldehydo-D-ribose 5-phosphate + D-glyceraldehyde 3-phosphate + L-glutamine = pyridoxal 5'-phosphate + L-glutamate + phosphate + 3 H2O + H(+). It functions in the pathway cofactor biosynthesis; pyridoxal 5'-phosphate biosynthesis. Functionally, catalyzes the formation of pyridoxal 5'-phosphate from ribose 5-phosphate (RBP), glyceraldehyde 3-phosphate (G3P) and ammonia. The ammonia is provided by PDX2. Can also use ribulose 5-phosphate and dihydroxyacetone phosphate as substrates, resulting from enzyme-catalyzed isomerization of RBP and G3P, respectively. Also plays an indirect role in resistance to singlet oxygen-generating photosensitizers. This Phaseolus vulgaris (Kidney bean) protein is Pyridoxal 5'-phosphate synthase subunit PDX1 (PDX1).